The chain runs to 255 residues: 5-oxoprolinase subunit A (255 aa).

This sequence belongs to the LamB/PxpA family. Forms a complex composed of PxpA, PxpB and PxpC.

The catalysed reaction is 5-oxo-L-proline + ATP + 2 H2O = L-glutamate + ADP + phosphate + H(+). In terms of biological role, catalyzes the cleavage of 5-oxoproline to form L-glutamate coupled to the hydrolysis of ATP to ADP and inorganic phosphate. The sequence is that of 5-oxoprolinase subunit A from Pyrococcus horikoshii (strain ATCC 700860 / DSM 12428 / JCM 9974 / NBRC 100139 / OT-3).